Reading from the N-terminus, the 136-residue chain is 2-hydroxyisobutanoyl-CoA mutase small subunit (136 aa).

One can recognise a B12-binding domain in the interval 5–133 (PIRVLLAKVG…DSIRSLVAAR (129 aa)). His-18 contributes to the adenosylcob(III)alamin binding site.

This sequence belongs to the acyl-CoA mutase small subunit family. In terms of assembly, homotetramer composed of two large substrate-binding subunits (HcmA) and two small cobalamin-binding subunits (HcmB). Adenosylcob(III)alamin is required as a cofactor.

It catalyses the reaction 2-hydroxyisobutanoyl-CoA = (3S)-3-hydroxybutanoyl-CoA. Its function is as follows. Together with HcmA, catalyzes the isomerization of 2-hydroxyisobutyryl-CoA and 3-hydroxybutyryl-CoA. Is specific for 2-hydroxyisobutyryl-CoA and (S)-3-hydroxybutyryl-CoA, and shows only very low activity with (R)-3-hydroxybutyryl-CoA, isobutyryl-CoA and butyryl-CoA. In vitro, can isomerize pivalyl-CoA and isovaleryl-CoA, with much lower efficiency. Plays a central role in the degradation of substrates bearing a tert-butyl moiety, such as the fuel oxygenate methyl tert-butyl ether (MTBE) and its metabolites. This is 2-hydroxyisobutanoyl-CoA mutase small subunit from Aquincola tertiaricarbonis.